We begin with the raw amino-acid sequence, 184 residues long: Protein YrdA (184 aa).

Belongs to the gamma-class carbonic anhydrase family.

The chain is Protein YrdA (yrdA) from Escherichia coli (strain K12).